Here is an 883-residue protein sequence, read N- to C-terminus: Serine/threonine-protein kinase greatwall (883 aa).

Residue Met-1 is modified to N-acetylmethionine. The disordered stretch occupies residues 1–23 (MEPTMGGEMESGGGAATGECVNR). The Protein kinase domain occupies 35-839 (FTIVKPISRG…MKELKHHPLF (805 aa)). Residues 41 to 49 (ISRGAFGKV) and Lys-62 each bind ATP. Asp-156 (proton acceptor) is an active-site residue. A phosphothreonine mark is found at Thr-209 and Thr-224. The residue at position 295 (Ser-295) is a Phosphoserine. Residues 298–317 (RLATSSTSSPSHTFISSMES) form a disordered region. Residues 301 to 314 (TSSTSSPSHTFISS) show a composition bias toward low complexity. Residues Ser-373 and Ser-456 each carry the phosphoserine modification. The tract at residues 511–530 (ENVGSSFTDKHQTPEKSPVP) is disordered. Thr-523 carries the phosphothreonine modification. Residues Ser-556 and Ser-560 each carry the phosphoserine modification. The tract at residues 569-597 (IHMDSDSSFPGISIMESPLGGQSLDPDKN) is disordered. Phosphoserine is present on residues Ser-635, Ser-661, and Ser-672. Residues 706–737 (RSDMPYQQTPNQVKSETPYRTPKSVRRGAAPV) are disordered. A compositionally biased stretch (polar residues) spans 710 to 720 (PYQQTPNQVKS). Thr-726 carries the phosphothreonine modification. Phosphoserine is present on Ser-729. Thr-745 carries the phosphothreonine; by CDK1 modification. In terms of domain architecture, AGC-kinase C-terminal spans 840–883 (SGVDWENLQHQKMPFIPQPDDETDTSYFEARNNAQHLTVSGFSL). Residues Ser-879 and Ser-882 each carry the phosphoserine modification.

This sequence belongs to the protein kinase superfamily. AGC Ser/Thr protein kinase family. Post-translationally, phosphorylation at Thr-745 by CDK1 during M phase activates its kinase activity. Maximum phosphorylation occurs in prometaphase.

It is found in the cytoplasm. Its subcellular location is the cytoskeleton. It localises to the microtubule organizing center. The protein localises to the centrosome. The protein resides in the nucleus. It catalyses the reaction L-seryl-[protein] + ATP = O-phospho-L-seryl-[protein] + ADP + H(+). The catalysed reaction is L-threonyl-[protein] + ATP = O-phospho-L-threonyl-[protein] + ADP + H(+). Its function is as follows. Serine/threonine kinase that plays a key role in M phase by acting as a regulator of mitosis entry and maintenance. Acts by promoting the inactivation of protein phosphatase 2A (PP2A) during M phase: does not directly inhibit PP2A but acts by mediating phosphorylation and subsequent activation of ARPP19 and ENSA at 'Ser-62' and 'Ser-67', respectively. ARPP19 and ENSA are phosphatase inhibitors that specifically inhibit the PPP2R2D (PR55-delta) subunit of PP2A. Inactivation of PP2A during M phase is essential to keep cyclin-B1-CDK1 activity high. Following DNA damage, it is also involved in checkpoint recovery by being inhibited. The sequence is that of Serine/threonine-protein kinase greatwall (MASTL) from Bos taurus (Bovine).